Reading from the N-terminus, the 118-residue chain is Holo-[acyl-carrier-protein] synthase (118 aa).

Mg(2+) is bound by residues D8 and E58.

The protein belongs to the P-Pant transferase superfamily. AcpS family. Mg(2+) is required as a cofactor.

It localises to the cytoplasm. The catalysed reaction is apo-[ACP] + CoA = holo-[ACP] + adenosine 3',5'-bisphosphate + H(+). Transfers the 4'-phosphopantetheine moiety from coenzyme A to a Ser of acyl-carrier-protein. The protein is Holo-[acyl-carrier-protein] synthase of Listeria innocua serovar 6a (strain ATCC BAA-680 / CLIP 11262).